Reading from the N-terminus, the 140-residue chain is Pro-variola growth factor (140 aa).

A signal peptide spans 1–18; it reads MSMKYLMLLFAAMIIRSF. Topologically, residues 19 to 100 are extracellular; the sequence is ANSGNAIETT…SEKPNTTTSY (82 aa). Asn-34 is a glycosylation site (N-linked (GlcNAc...) asparagine; by host). The region spanning 41–81 is the EGF-like domain; the sequence is AIRLCGPEGNGYCFHGICIHARDIDGMYCRCSHGYTGIRCQ. 3 disulfide bridges follow: Cys-45-Cys-58, Cys-53-Cys-69, and Cys-71-Cys-80. N-linked (GlcNAc...) asparagine; by host glycosylation is present at Asn-95. Residues 101–121 traverse the membrane as a helical segment; sequence IPSPGIVLVLLVSIIMCCLLF. The Cytoplasmic segment spans residues 122–140; it reads VYRFTRRTNKLPLQDMVVP.

This sequence belongs to the orthopoxvirus OPG019 family. In terms of assembly, variola growth factor interacts with host EGFR and promotes EGFR dimerization.

The protein localises to the host membrane. It is found in the secreted. Its function is as follows. Stimulates cellular proliferation (hyperplasia)and mobility around infected cells to promote rapid and efficient spread of infection. This effect is beneficial for virus replication in vivo, because poxviruses replicate possibly better in proliferating cells than in quiescent cells. Acts by binding host EGFR, inducing its dimerization, autophosphorylation and leading to activation of several cellular pathways regulating cell proliferation or cell survival. The activation by host EGFR of mitogen activated protein kinases (MAPK) and extracellular-signal regulated kinases (ERK) are essential for the positive effect of vaccinia growth factor on poxvirus virulence in vivo. This chain is Pro-variola growth factor (OPG019), found in Variola virus.